Consider the following 119-residue polypeptide: MKKEHRIKRSDEFSRVFNEGFSVANRQFVIYVLPKEGQDFFRVGLSVSKKIGNAVTRNRVKRLIRTFFQEHEQAISGERDYVIIARKPAADMTYEQVKGSLWHVCKKAKIIQPKVRAHK.

The protein belongs to the RnpA family. As to quaternary structure, consists of a catalytic RNA component (M1 or rnpB) and a protein subunit.

It carries out the reaction Endonucleolytic cleavage of RNA, removing 5'-extranucleotides from tRNA precursor.. Functionally, RNaseP catalyzes the removal of the 5'-leader sequence from pre-tRNA to produce the mature 5'-terminus. It can also cleave other RNA substrates such as 4.5S RNA. The protein component plays an auxiliary but essential role in vivo by binding to the 5'-leader sequence and broadening the substrate specificity of the ribozyme. This Halalkalibacterium halodurans (strain ATCC BAA-125 / DSM 18197 / FERM 7344 / JCM 9153 / C-125) (Bacillus halodurans) protein is Ribonuclease P protein component.